A 317-amino-acid chain; its full sequence is Olfactory receptor-like protein OLF3 (317 aa).

The Extracellular segment spans residues 1-25; the sequence is MGTGNQTWVREFVLLGLSSDWDTEV. Asn5 carries an N-linked (GlcNAc...) asparagine glycan. The helical transmembrane segment at 26-49 threads the bilayer; the sequence is SLFVLFLITYMVTVLGNFLIILLI. Residues 50 to 57 lie on the Cytoplasmic side of the membrane; sequence RLDSRLHT. The chain crosses the membrane as a helical span at residues 58-79; sequence PMYFFLTNLSLVDVSYATSIIP. Topologically, residues 80 to 100 are extracellular; sequence QMLAHLLAAHKAIPFVSCAAQ. Residues 101–120 traverse the membrane as a helical segment; that stretch reads LFFSLGLGGIEFVLLAVMAY. Residues 121 to 139 lie on the Cytoplasmic side of the membrane; it reads DRYVAVCDPLRYSVIMHGG. A helical transmembrane segment spans residues 140–158; the sequence is LCTRLAITSWVSGSMNSLM. The Extracellular portion of the chain corresponds to 159–196; it reads QTVITFQLPMCTNKYIDHISCELLAVVRLACVDTSSNE. The helical transmembrane segment at 197-219 threads the bilayer; sequence IAIMVSSIVLLMTPFCLVLLSYI. Over 220 to 236 the chain is Cytoplasmic; the sequence is QIISTILKIQSTEGRKK. A helical transmembrane segment spans residues 237 to 260; sequence AFHTCASHLTVVVLCYGMAIFTYI. Over 261 to 272 the chain is Extracellular; that stretch reads QPRSSPSVLQEK. A helical membrane pass occupies residues 273-292; sequence LISLFYSVLTPMLNPMIYSV. Residues 293-317 lie on the Cytoplasmic side of the membrane; sequence RNKEVKGAWQKLLGQLTGITSKLAT.

Belongs to the G-protein coupled receptor 1 family.

It localises to the cell membrane. Its function is as follows. Putative odorant or sperm cell receptor. The protein is Olfactory receptor-like protein OLF3 of Canis lupus familiaris (Dog).